Here is an 83-residue protein sequence, read N- to C-terminus: uncharacterized protein (83 aa).

This is an uncharacterized protein from Escherichia phage 186 (Bacteriophage 186).